A 510-amino-acid polypeptide reads, in one-letter code: Cobyric acid synthase (510 aa).

Residues 262-460 form the GATase cobBQ-type domain; the sequence is EIKVGIIKLP…IHGIFENDEW (199 aa). The Nucleophile role is filled by C343. The active site involves H452.

This sequence belongs to the CobB/CobQ family. CobQ subfamily.

It functions in the pathway cofactor biosynthesis; adenosylcobalamin biosynthesis. Functionally, catalyzes amidations at positions B, D, E, and G on adenosylcobyrinic A,C-diamide. NH(2) groups are provided by glutamine, and one molecule of ATP is hydrogenolyzed for each amidation. This is Cobyric acid synthase from Prochlorococcus marinus (strain MIT 9515).